Reading from the N-terminus, the 371-residue chain is Loganic acid O-methyltransferase (371 aa).

Tyr-31 serves as a coordination point for S-adenosyl-L-homocysteine. 2 residues coordinate loganate: Tyr-37 and Gln-38. 6 residues coordinate S-adenosyl-L-homocysteine: Cys-78, Asn-83, Asp-114, His-115, Ser-141, and Phe-142. Residues His-162 and Trp-163 each coordinate loganate. Mg(2+) is bound at residue Asn-180. Loganate-binding residues include Ala-241 and His-245. Mg(2+) is bound by residues Asp-267, Phe-269, and Asn-270. Residues Gln-273 and Gln-316 each coordinate loganate.

The protein belongs to the methyltransferase superfamily. Type-7 methyltransferase family. In terms of assembly, homodimer. It depends on Mg(2+) as a cofactor. In terms of tissue distribution, expressed in leaves (especially in leaf epidermis), flowers, siliques and stems, and, at low levels, in hairy roots.

It carries out the reaction loganate + S-adenosyl-L-methionine = loganin + S-adenosyl-L-homocysteine. It functions in the pathway alkaloid biosynthesis. Strongly repressed by loganin and slightly by S-adenosyl-L-homocysteine. In terms of biological role, component of the seco-iridoid and derivatives monoterpenoid indole alkaloids (MIAs, e.g. vinblastine and ajmalicine) biosynthesis pathway. Catalyzes the methylation of loganic acid (6S,7R) to produce loganin. Weak activity with secologanic acid as substrate. Inactive on deoxyloganic, dehydrologanic, epiloganic and loganetic acid. The polypeptide is Loganic acid O-methyltransferase (Catharanthus roseus (Madagascar periwinkle)).